The primary structure comprises 238 residues: tRNA (guanine-N(7)-)-methyltransferase (238 aa).

Glu68, Glu93, Asp120, and Asp143 together coordinate S-adenosyl-L-methionine. Asp143 is an active-site residue. Substrate is bound by residues Lys147, Asp179, and 216 to 219 (TKFE).

Belongs to the class I-like SAM-binding methyltransferase superfamily. TrmB family.

The enzyme catalyses guanosine(46) in tRNA + S-adenosyl-L-methionine = N(7)-methylguanosine(46) in tRNA + S-adenosyl-L-homocysteine. It participates in tRNA modification; N(7)-methylguanine-tRNA biosynthesis. Functionally, catalyzes the formation of N(7)-methylguanine at position 46 (m7G46) in tRNA. The protein is tRNA (guanine-N(7)-)-methyltransferase of Shewanella baltica (strain OS195).